Consider the following 176-residue polypeptide: MEIVYKPLDIRNEEQFASIKKLIDADLSEPYSIYVYRYFLNQWPELTYIAVDNKSGTPNIPIGCIVCKMDPHRNVRLRGYIGMLAVESTYRGHGIAKKLVEIAIDKMQREHCDEIMLETEVENSAALNLYEGMGFIRMKRMFRYYLNEGDAFKLILPLTEKSCTRSTFLMHGRLAT.

The region spanning 3–159 (IVYKPLDIRN…DAFKLILPLT (157 aa)) is the N-acetyltransferase domain.

This sequence belongs to the acetyltransferase family. MAK3 subfamily. Component of the N-terminal acetyltransferase C (NatC) complex, which is composed of MAK3, MAK10 and MAK31.

It localises to the cytoplasm. The protein resides in the nucleus. It catalyses the reaction N-terminal L-methionyl-L-leucyl-[protein] + acetyl-CoA = N-terminal N(alpha)-acetyl-L-methionyl-L-leucyl-[protein] + CoA + H(+). The enzyme catalyses N-terminal L-methionyl-L-isoleucyl-[protein] + acetyl-CoA = N-terminal N(alpha)-acetyl-L-methionyl-L-isoleucyl-[protein] + CoA + H(+). The catalysed reaction is N-terminal L-methionyl-L-phenylalanyl-[protein] + acetyl-CoA = N-terminal N(alpha)-acetyl-L-methionyl-L-phenylalanyl-[protein] + CoA + H(+). It carries out the reaction N-terminal L-methionyl-L-tryptophyl-[protein] + acetyl-CoA = N-terminal N(alpha)-acetyl-L-methionyl-L-tryptophyl-[protein] + CoA + H(+). It catalyses the reaction N-terminal L-methionyl-L-tyrosyl-[protein] + acetyl-CoA = N-terminal N(alpha)-acetyl-L-methionyl-L-tyrosyl-[protein] + CoA + H(+). Functionally, catalytic component of the NatC N-terminal acetyltransferase, which catalyzes acetylation of the N-terminus Met of L-A virus GAG protein and possibly GRH1. This is N-alpha-acetyltransferase 30 (MAK3) from Saccharomyces cerevisiae (strain ATCC 204508 / S288c) (Baker's yeast).